The following is a 121-amino-acid chain: Basic phospholipase A2 homolog piratoxin-2 (121 aa).

Disulfide bonds link C26–C115, C28–C44, C43–C95, C49–C121, C50–C88, C57–C81, and C75–C86. The tract at residues 105-117 (KKYRYHLKPFCKK) is important for membrane-damaging activities in eukaryotes and bacteria; heparin-binding.

This sequence belongs to the phospholipase A2 family. Group II subfamily. K49 sub-subfamily. In terms of assembly, homodimer; non-covalently linked. In terms of tissue distribution, expressed by the venom gland.

The protein resides in the secreted. Snake venom phospholipase A2 (PLA2) homolog that lacks enzymatic activity. Shows myotoxic activity and edema-inducing activities in vivo. A model of myotoxic mechanism has been proposed: an apo Lys49-PLA2 is activated by the entrance of a hydrophobic molecule (e.g. fatty acid) at the hydrophobic channel of the protein leading to a reorientation of a monomer. This reorientation causes a transition between 'inactive' to 'active' states, causing alignment of C-terminal and membrane-docking sites (MDoS) side-by-side and putting the membrane-disruption sites (MDiS) in the same plane, exposed to solvent and in a symmetric position for both monomers. The MDoS region stabilizes the toxin on membrane by the interaction of charged residues with phospholipid head groups. Subsequently, the MDiS region destabilizes the membrane with penetration of hydrophobic residues. This insertion causes a disorganization of the membrane, allowing an uncontrolled influx of ions (i.e. calcium and sodium), and eventually triggering irreversible intracellular alterations and cell death. This chain is Basic phospholipase A2 homolog piratoxin-2, found in Bothrops pirajai (Piraja's lancehead).